Here is a 583-residue protein sequence, read N- to C-terminus: 2-succinyl-5-enolpyruvyl-6-hydroxy-3-cyclohexene-1-carboxylate synthase (583 aa).

This sequence belongs to the TPP enzyme family. MenD subfamily. Homodimer. Mg(2+) is required as a cofactor. Mn(2+) serves as cofactor. The cofactor is thiamine diphosphate.

The catalysed reaction is isochorismate + 2-oxoglutarate + H(+) = 5-enolpyruvoyl-6-hydroxy-2-succinyl-cyclohex-3-ene-1-carboxylate + CO2. The protein operates within quinol/quinone metabolism; 1,4-dihydroxy-2-naphthoate biosynthesis; 1,4-dihydroxy-2-naphthoate from chorismate: step 2/7. It functions in the pathway quinol/quinone metabolism; menaquinone biosynthesis. Catalyzes the thiamine diphosphate-dependent decarboxylation of 2-oxoglutarate and the subsequent addition of the resulting succinic semialdehyde-thiamine pyrophosphate anion to isochorismate to yield 2-succinyl-5-enolpyruvyl-6-hydroxy-3-cyclohexene-1-carboxylate (SEPHCHC). The polypeptide is 2-succinyl-5-enolpyruvyl-6-hydroxy-3-cyclohexene-1-carboxylate synthase (Chlorobaculum parvum (strain DSM 263 / NCIMB 8327) (Chlorobium vibrioforme subsp. thiosulfatophilum)).